Consider the following 155-residue polypeptide: Small ribosomal subunit protein uS7 (155 aa).

It belongs to the universal ribosomal protein uS7 family. In terms of assembly, part of the 30S ribosomal subunit. Contacts proteins S9 and S11.

In terms of biological role, one of the primary rRNA binding proteins, it binds directly to 16S rRNA where it nucleates assembly of the head domain of the 30S subunit. Is located at the subunit interface close to the decoding center, probably blocks exit of the E-site tRNA. The sequence is that of Small ribosomal subunit protein uS7 from Amoebophilus asiaticus (strain 5a2).